The following is a 319-amino-acid chain: Oxaloacetate tautomerase fahd2, mitochondrial (319 aa).

A mitochondrion-targeting transit peptide spans 1 to 31; the sequence is MLTQTRVALRVLKNAHLTLPKRNISQSPALS. E164, E166, and D195 together coordinate Mg(2+).

Belongs to the FAH family. The cofactor is Mg(2+). It depends on Mn(2+) as a cofactor.

It is found in the mitochondrion. It carries out the reaction oxaloacetate = enol-oxaloacetate. Functionally, tautomerase that converts enol-oxaloacetate, a strong inhibitor of succinate dehydrogenase, to the physiological keto form of oxaloacetate. It is thereby required to maximize aerobic respiration efficiency by preventing succinate dehydrogenase inhibition. The polypeptide is Oxaloacetate tautomerase fahd2, mitochondrial (fahd2) (Xenopus laevis (African clawed frog)).